An 81-amino-acid polypeptide reads, in one-letter code: Photosystem I iron-sulfur center (81 aa).

4Fe-4S ferredoxin-type domains follow at residues 2 to 31 (SHFVKIYDTCIGCTQCVRACPTDVLEMIPW) and 39 to 68 (IASAPRTEDCVGCKRCESACPTDFLSVRVY). 8 residues coordinate [4Fe-4S] cluster: Cys11, Cys14, Cys17, Cys21, Cys48, Cys51, Cys54, and Cys58.

In terms of assembly, the eukaryotic PSI reaction center is composed of at least 11 subunits. It depends on [4Fe-4S] cluster as a cofactor.

The protein localises to the plastid thylakoid membrane. It catalyses the reaction reduced [plastocyanin] + hnu + oxidized [2Fe-2S]-[ferredoxin] = oxidized [plastocyanin] + reduced [2Fe-2S]-[ferredoxin]. Apoprotein for the two 4Fe-4S centers FA and FB of photosystem I (PSI); essential for photochemical activity. FB is the terminal electron acceptor of PSI, donating electrons to ferredoxin. The C-terminus interacts with PsaA/B/D and helps assemble the protein into the PSI complex. Required for binding of PsaD and PsaE to PSI. PSI is a plastocyanin-ferredoxin oxidoreductase, converting photonic excitation into a charge separation, which transfers an electron from the donor P700 chlorophyll pair to the spectroscopically characterized acceptors A0, A1, FX, FA and FB in turn. The polypeptide is Photosystem I iron-sulfur center (Cuscuta exaltata (Tall dodder)).